A 327-amino-acid chain; its full sequence is MEAIKGSEVNVPDAVIAWLLDGHGGVKPLQDDAVIDKDHPCWLHLNYANPESAQWLTETPLLPNLVRDALAGESLRPRVTRMGDGTLITLRCINGSTDERPDQLVAMRLYIDERLIVSTRQRKVLALDDIIHDLNEGSGPADVGGWLVDACDALTDHASEFIEELHDKIIDLEDNLLEEIVPPRGVLALLRKQLIVMRRYMSPQRDVFSRLASERFSWMTDDHRRRMQDIADRLGRGLDEIDACIARTAVMADEISQTMQESLSRRSYTMSLMAMVFLPSTFLTGLFGVNLGGIPGGGWHLGFSVFCVALVLLIGGVTWWLHRSKWL.

Over 1–273 (MEAIKGSEVN…SRRSYTMSLM (273 aa)) the chain is Cytoplasmic. A helical transmembrane segment spans residues 274–294 (AMVFLPSTFLTGLFGVNLGGI). Residues 295 to 300 (PGGGWH) are Periplasmic-facing. The chain crosses the membrane as a helical span at residues 301–321 (LGFSVFCVALVLLIGGVTWWL). The Cytoplasmic portion of the chain corresponds to 322–327 (HRSKWL).

This sequence belongs to the CorA metal ion transporter (MIT) (TC 1.A.35) family.

The protein localises to the cell inner membrane. The catalysed reaction is Zn(2+)(out) + H(+)(out) = Zn(2+)(in) + H(+)(in). Functionally, zinc transporter. Acts as a Zn(2+):proton symporter, which likely mediates zinc ion uptake. This Cronobacter sakazakii (strain ATCC BAA-894) (Enterobacter sakazakii) protein is Zinc transport protein ZntB.